A 157-amino-acid polypeptide reads, in one-letter code: Thioredoxin-T (157 aa).

The region spanning 2 to 107 is the Thioredoxin domain; it reads VYPVRNKDDL…LAKLMEKHAG (106 aa). C32 and C35 are disulfide-bonded. Residues 132–157 form a disordered region; it reads ESSESDNDNNNVNEVSAHDENAVLEH. Residues 147-157 show a composition bias toward basic and acidic residues; the sequence is SAHDENAVLEH.

It belongs to the thioredoxin family. Testis specific. Not expressed in the embryo. Becomes progressively more strongly expressed during larval and pupal development. In testis, it is strongly expressed in young spermatocytes, and postmeiotic spermatid stages, then expression decreases at the nuclear elongation stage. Strongly expressed in the waste bag, in which material no longer needed for the mature sperm is eliminated. Not expressed in the stem cells and spermatogonial cells.

The protein resides in the nucleus. Its subcellular location is the chromosome. Functionally, probably participates in various redox reactions through the reversible oxidation of its active center dithiol to a disulfide and catalyzes dithiol-disulfide exchange reactions. Its tissue specificity suggests a regulatory role in the germline. In Drosophila melanogaster (Fruit fly), this protein is Thioredoxin-T (TrxT).